The chain runs to 300 residues: Putative 1-phosphofructokinase (300 aa).

ATP contacts are provided by residues 214-219 and 246-247; these read SDGAQG and GD. Asp-247 (proton acceptor) is an active-site residue.

The protein belongs to the carbohydrate kinase PfkB family.

The enzyme catalyses beta-D-fructose 1-phosphate + ATP = beta-D-fructose 1,6-bisphosphate + ADP + H(+). Catalyzes the ATP-dependent phosphorylation of fructose-l-phosphate to fructose-l,6-bisphosphate. This Mycoplasma pneumoniae (strain ATCC 29342 / M129 / Subtype 1) (Mycoplasmoides pneumoniae) protein is Putative 1-phosphofructokinase (fruK).